A 520-amino-acid chain; its full sequence is Non-specific phospholipase C6 (520 aa).

A signal peptide spans 1 to 31 (MKPSSASRFSLTFSHFLTLYCLLTQTHVAQG).

It belongs to the bacterial phospholipase C family. Expressed in roots, leaves, stems, flowers and siliques.

It localises to the secreted. The sequence is that of Non-specific phospholipase C6 (NPC6) from Arabidopsis thaliana (Mouse-ear cress).